A 121-amino-acid polypeptide reads, in one-letter code: Large ribosomal subunit protein bL19 (121 aa).

The protein belongs to the bacterial ribosomal protein bL19 family.

In terms of biological role, this protein is located at the 30S-50S ribosomal subunit interface and may play a role in the structure and function of the aminoacyl-tRNA binding site. The chain is Large ribosomal subunit protein bL19 from Mesomycoplasma hyopneumoniae (strain 7448) (Mycoplasma hyopneumoniae).